A 130-amino-acid polypeptide reads, in one-letter code: uncharacterized protein (130 aa).

Belongs to the thioester dehydratase family. FabZ subfamily.

This is an uncharacterized protein from Bacillus subtilis (strain 168).